An 83-amino-acid chain; its full sequence is Retinal cone rhodopsin-sensitive cGMP 3',5'-cyclic phosphodiesterase subunit gamma (83 aa).

The interval 1–54 (MSDSPSLSPPAPSQGPTTPRKGPPKFKQRQTRQFKSKPPKKGVKGFGDDIPGME) is disordered. Residues 22 to 43 (GPPKFKQRQTRQFKSKPPKKGV) show a composition bias toward basic residues.

It belongs to the rod/cone cGMP-PDE gamma subunit family. In terms of assembly, tetramer composed of two catalytic chains (alpha and beta), and two inhibitory chains (gamma).

It catalyses the reaction 3',5'-cyclic GMP + H2O = GMP + H(+). Its function is as follows. Participates in processes of transmission and amplification of the visual signal. cGMP-PDEs are the effector molecules in G-protein-mediated phototransduction in vertebrate rods and cones. This chain is Retinal cone rhodopsin-sensitive cGMP 3',5'-cyclic phosphodiesterase subunit gamma (Pde6h), found in Mus musculus (Mouse).